The chain runs to 1006 residues: Probable beta-galactosidase A (1006 aa).

The N-terminal stretch at 1 to 18 is a signal peptide; the sequence is MKLLSVCAIALLAAQAAG. Substrate is bound by residues Tyr96, Asn140, Ala141, and Glu142. N-linked (GlcNAc...) asparagine glycosylation occurs at Asn156. Asn199 is a substrate binding site. Residue Glu200 is the Proton donor of the active site. The cysteines at positions 205 and 206 are disulfide-linked. Residue Tyr260 coordinates substrate. An intrachain disulfide couples Cys266 to Cys315. Glu298 (nucleophile) is an active-site residue. Tyr364 lines the substrate pocket. Residues Asn373, Asn402, Asn422, Asn622, Asn760, Asn777, and Asn914 are each glycosylated (N-linked (GlcNAc...) asparagine).

The protein belongs to the glycosyl hydrolase 35 family.

It is found in the secreted. The enzyme catalyses Hydrolysis of terminal non-reducing beta-D-galactose residues in beta-D-galactosides.. Cleaves beta-linked terminal galactosyl residues from gangliosides, glycoproteins, and glycosaminoglycans. This chain is Probable beta-galactosidase A (lacA), found in Aspergillus fumigatus (strain ATCC MYA-4609 / CBS 101355 / FGSC A1100 / Af293) (Neosartorya fumigata).